The chain runs to 332 residues: Potassium channel subfamily K member 17 (332 aa).

Residues 1 to 20 (MYRPRARAAPEGRVRGCAVP) lie on the Cytoplasmic side of the membrane. Residues 21–43 (STVLLLLAYLAYLALGTGVFWTL) form a helical membrane-spanning segment. N-linked (GlcNAc...) asparagine glycans are attached at residues Asn65 and Asn94. The pore-forming intramembrane region spans 106 to 124 (SFFFSVSTITTIGYGNLSP). K(+) contacts are provided by Thr116, Ile117, Gly118, and Tyr119. The interval 116 to 121 (TIGYGN) is selectivity filter 1. The helical transmembrane segment at 128–148 (AARLFCIFFALVGIPLNLVVL) threads the bilayer. The Cytoplasmic portion of the chain corresponds to 149–179 (NRLGHLMQQGVNHWASRLGGTWQDPDKARWL). Residues 180–200 (AGSGALLSGLLLFLLLPPLLF) traverse the membrane as a helical segment. The segment at residues 211-230 (GFYFAFITLSTVGFGDYVIG) is an intramembrane region (pore-forming). K(+)-binding residues include Thr221, Val222, Gly223, and Phe224. Positions 221–226 (TVGFGD) are selectivity filter 2. A helical membrane pass occupies residues 244-264 (MVSLWILFGMAWLALIIKLIL). Residues 265-332 (SQLETPGRVC…AHAAGCGKDS (68 aa)) lie on the Cytoplasmic side of the membrane. The disordered stretch occupies residues 287 to 312 (SQSWRQGPDREPESHSPQQGCYPEGP).

Belongs to the two pore domain potassium channel (TC 1.A.1.8) family. Homodimer; disulfide-linked. Heterodimer with KCNK5 and KCNK16. As to expression, widely expressed. Highly expressed in aorta and coronary artery. Expressed in pancreas, in both endocrine (alpha, beta, gamma, delta, and epsilon) and exocrine (acinar and ductal) cells.

The protein resides in the cell membrane. It carries out the reaction K(+)(in) = K(+)(out). It catalyses the reaction Rb(+)(in) = Rb(+)(out). The enzyme catalyses Cs(+)(in) = Cs(+)(out). With respect to regulation, inhibited by Ba(2+), quinidine, chloroform and halothane. Activated at alkaline pH. Activated by quinine and isoflurane. In terms of biological role, k(+) channel that conducts voltage-dependent outward rectifying currents upon membrane depolarization. Voltage sensing is coupled to K(+) electrochemical gradient in an 'ion flux gating' mode where outward but not inward ion flow opens the gate. Homo- and heterodimerizes to form functional channels with distinct regulatory and gating properties. Present in the cardiac conduction system where it may regulate action potential duration and beating frequency of cardiac myocytes. Permeable to other monovalent cations such as Rb(+) and Cs(+). This chain is Potassium channel subfamily K member 17, found in Homo sapiens (Human).